Here is an 829-residue protein sequence, read N- to C-terminus: Cadherin-16 (829 aa).

Residues 1–18 form the signal peptide; it reads MVPAWLWLLCFSVPQALV. Residues 19-786 lie on the Extracellular side of the membrane; it reads EVSPTTLHVE…MKGMPTKLSA (768 aa). 6 Cadherin domains span residues 25–126, 131–235, 242–336, 341–449, 455–564, and 569–665; these read LHVE…VPQF, YSAR…SIVE, EPVH…APVC, PPVS…APEF, GPVS…PPRL, and YEAD…APAL. N-linked (GlcNAc...) asparagine glycosylation is found at asparagine 517, asparagine 602, and asparagine 722. The segment at 666-786 is ectodomain G; it reads PLAPMPSRHL…MKGMPTKLSA (121 aa). A helical transmembrane segment spans residues 787-807; the sequence is VGILVGTLAAIGFFLILIFTH. Topologically, residues 808–829 are cytoplasmic; that stretch reads LALARKKDLDAPADNVPLKAAA.

In terms of tissue distribution, kidney specific. Limited to the basolateral membranes of renal tubular epithelial cells.

It is found in the cell membrane. In terms of biological role, cadherins are calcium-dependent cell adhesion proteins. They preferentially interact with themselves in a homophilic manner in connecting cells; cadherins may thus contribute to the sorting of heterogeneous cell types. The chain is Cadherin-16 (CDH16) from Oryctolagus cuniculus (Rabbit).